The primary structure comprises 83 residues: Small ribosomal subunit protein bS16 (83 aa).

Belongs to the bacterial ribosomal protein bS16 family.

The protein is Small ribosomal subunit protein bS16 of Shewanella baltica (strain OS223).